Here is a 179-residue protein sequence, read N- to C-terminus: Interleukin-22 (179 aa).

A signal peptide spans 1–33 (MAALQKSVSSFLMGTLATSCLLLLALLVQGGAA). Disulfide bonds link cysteine 40–cysteine 132 and cysteine 89–cysteine 178. 3 N-linked (GlcNAc...) asparagine glycosylation sites follow: asparagine 54, asparagine 68, and asparagine 97.

It belongs to the IL-10 family.

It is found in the secreted. In terms of biological role, cytokine that plays a critical role in modulating tissue responses during inflammation. Plays an essential role in the regeneration of epithelial cells to maintain barrier function after injury and for the prevention of further tissue damage. Unlike most of the cytokines, has no effect on immune cells. Signals through a heterodimeric receptor composed of two subunits, the specific receptor IL22RA1 which is present on non-immune cells in many organs and the shared subunit IL10RB. Ligation of IL22RA1 with IL22 induces activation of the tyrosine kinases JAK1 and TYK2, which in turn activates STAT3. In turn, promotes cell survival and proliferation through STAT3, ERK1/2 and PI3K/AKT pathways. Promotes phosphorylation of GSK3B at 'Ser-9' and CTTN. Promotes epithelial cell spreading. The protein is Interleukin-22 (IL22) of Homo sapiens (Human).